The chain runs to 369 residues: Anhydro-N-acetylmuramic acid kinase (369 aa).

12–19 contacts ATP; sequence GTSLDGVD.

This sequence belongs to the anhydro-N-acetylmuramic acid kinase family.

It carries out the reaction 1,6-anhydro-N-acetyl-beta-muramate + ATP + H2O = N-acetyl-D-muramate 6-phosphate + ADP + H(+). The protein operates within amino-sugar metabolism; 1,6-anhydro-N-acetylmuramate degradation. It functions in the pathway cell wall biogenesis; peptidoglycan recycling. Its function is as follows. Catalyzes the specific phosphorylation of 1,6-anhydro-N-acetylmuramic acid (anhMurNAc) with the simultaneous cleavage of the 1,6-anhydro ring, generating MurNAc-6-P. Is required for the utilization of anhMurNAc either imported from the medium or derived from its own cell wall murein, and thus plays a role in cell wall recycling. This chain is Anhydro-N-acetylmuramic acid kinase, found in Actinobacillus pleuropneumoniae serotype 3 (strain JL03).